An 880-amino-acid chain; its full sequence is Paramyosin (880 aa).

The tract at residues M1–V34 is nonhelical region. The stretch at A35–L859 forms a coiled coil. The interval L860–N880 is nonhelical region.

Belongs to the paramyosin family. In terms of assembly, homodimer.

It is found in the cytoplasm. The protein localises to the myofibril. Its function is as follows. Paramyosin is a major structural component of many thick filaments isolated from invertebrate muscles. The polypeptide is Paramyosin (Brugia malayi (Filarial nematode worm)).